A 487-amino-acid polypeptide reads, in one-letter code: MTLFERSAKELQAEIKAGNLSIADLTKEAYERIAKLDGDVQAFLASNEEKATAQAAEMDKVPFEERGPLFGLPIGVKDNIVTEGLETTCASKILEGFMPIYDATVVNKLREAGMITVGKLNMDEFAMGSSNENSYYKTTKNPWNLNHVPGGSSGASAASVAAGEVPFSLGSDTGGSIRQPAAYCGVVGMKPTYGRVSRFGLVAFASSLDQIGPITRNVEDNALLLEAIAGLDPNDSTSADVEVPNYAAALTGDVKGLRIAVPKEFLGEGVGEAARQSVLAALEVLKGLGATVEEVSLPHSKYALAAYYILSSSEASSNLSRFDGIRYGFRAENVTNLMDLYKETRAQGFGDEVKRRIMLGTYSLSAGTYDAYYKKAQQARTLIKADYDKVFEDFDVIIGPTSPTPAFKIGENVDDPMTMYANDILTIPMNLAGVPAISIPCGFDNGLPLGLQIIGKYFDEATIYRVAHAFEQATEFHKQVPQMWEGK.

Active-site charge relay system residues include lysine 77 and serine 152. Serine 176 functions as the Acyl-ester intermediate in the catalytic mechanism.

The protein belongs to the amidase family. GatA subfamily. Heterotrimer of A, B and C subunits.

It carries out the reaction L-glutamyl-tRNA(Gln) + L-glutamine + ATP + H2O = L-glutaminyl-tRNA(Gln) + L-glutamate + ADP + phosphate + H(+). Allows the formation of correctly charged Gln-tRNA(Gln) through the transamidation of misacylated Glu-tRNA(Gln) in organisms which lack glutaminyl-tRNA synthetase. The reaction takes place in the presence of glutamine and ATP through an activated gamma-phospho-Glu-tRNA(Gln). This chain is Glutamyl-tRNA(Gln) amidotransferase subunit A, found in Lysinibacillus sphaericus (strain C3-41).